A 403-amino-acid polypeptide reads, in one-letter code: MTESTFPQYPRLILSKGREKSLLRRHPWVFSGAVSRLEGKANLGETIDIVDHQGKWLARGAWSPASQIRARVWTFDKAESIDIAFFTRRLRQAQQWRDWLAKKDGLDSYRLIAGESDGLPGVTIDRFGHFLVLQLLSAGAEYQRAALISALQTCYPDCAIYDRSDVAVRKKEGMALTQGPVTGELPPALLPIEEYGMKLLVDIQGGHKTGYYLDQRDSRLATRRYVENQRVLNCFSYTGGFAVSALMGGCRQVVSVDTSQDALDIARQNVELNQLDLSKAEFVRDDVFKLLRAYREHGEKFDVIIMDPPKFVENKSQLMGACRGYKDINMLAIQLLNPGGILLTFSCSGLMTSDLFQKIIADAAIDAGRDVQFIEQFRQAADHPVIATYPEGLYLKGFACRVM.

The region spanning 9–88 is the PUA domain; that stretch reads YPRLILSKGR…ESIDIAFFTR (80 aa).

The protein belongs to the methyltransferase superfamily. RlmI family.

Its subcellular location is the cytoplasm. The enzyme catalyses cytidine(1962) in 23S rRNA + S-adenosyl-L-methionine = 5-methylcytidine(1962) in 23S rRNA + S-adenosyl-L-homocysteine + H(+). In terms of biological role, specifically methylates the cytosine at position 1962 (m5C1962) of 23S rRNA. The polypeptide is Ribosomal RNA large subunit methyltransferase I (Salmonella paratyphi C (strain RKS4594)).